We begin with the raw amino-acid sequence, 494 residues long: MAGHVHTGSAAVLLVGLSFRSAPVSLLEQVSTVDTDLPKLENALLDHDSLSEALVLSTCNRMEFYTVANAFHPGLDHIVDTIATYSGLDDSELEPHLYVHYSDAAVEHMLNVASGLDSMVLGEQQIIGQLRGAYEESKGAGTVGRTLHDLTQRALRTGKRVHSETEIDSAGSSMVSFALDRALTVLGIPEASSDALSGRRAVVIGAGAMASLASTHLGRLGIEHVTVANRTVDRAEQLASHAVEAGVPARGIGLDELPAALTGADIVVSATGAVGTVVSAADIKAAQQVRDGRQQVLIDLSMPRDIEQATADVPGVALLNIEELTGMTEDTIEDEDAARGIVAEELESFLEQQRAQAVVPTVKALRQQAMDALSNEMLALQRQTPGMSDEDREAVNRSMRRLVEKLLHTPTVQAKKLSAAGQSVSYPDALAALFNLPTGMTQQVSAVKGANAGSGQRKKQKPQENRVSTARAVYRSTYQDLTQASTPGGKDDDQ.

Residues 58–61, serine 118, 123–125, and glutamine 129 each bind substrate; these read TCNR and EQQ. Residue cysteine 59 is the Nucleophile of the active site. 205–210 lines the NADP(+) pocket; that stretch reads GAGAMA. The interval 448 to 494 is disordered; that stretch reads KGANAGSGQRKKQKPQENRVSTARAVYRSTYQDLTQASTPGGKDDDQ. Residues 476-486 show a composition bias toward polar residues; sequence STYQDLTQAST.

This sequence belongs to the glutamyl-tRNA reductase family. In terms of assembly, homodimer.

The catalysed reaction is (S)-4-amino-5-oxopentanoate + tRNA(Glu) + NADP(+) = L-glutamyl-tRNA(Glu) + NADPH + H(+). Its pathway is porphyrin-containing compound metabolism; protoporphyrin-IX biosynthesis; 5-aminolevulinate from L-glutamyl-tRNA(Glu): step 1/2. Catalyzes the NADPH-dependent reduction of glutamyl-tRNA(Glu) to glutamate 1-semialdehyde (GSA). In Corynebacterium urealyticum (strain ATCC 43042 / DSM 7109), this protein is Glutamyl-tRNA reductase.